Here is a 268-residue protein sequence, read N- to C-terminus: Lipase (268 aa).

An N-terminal signal peptide occupies residues 1 to 34 (MRLSRRAATASALLLTPALALFGASAAVSAPRIQ). Catalysis depends on serine 44, which acts as the Nucleophile. Cystine bridges form between cysteine 61/cysteine 86, cysteine 127/cysteine 135, and cysteine 185/cysteine 232. The active site involves histidine 250.

As to quaternary structure, monomer.

Its subcellular location is the secreted. It catalyses the reaction a triacylglycerol + H2O = a diacylglycerol + a fatty acid + H(+). It carries out the reaction hexadecanoyl-CoA + H2O = hexadecanoate + CoA + H(+). Its activity is regulated as follows. Inhibited by 3,4-dichloroisocoumarin and tetrahydrolipstatin in the absence of substrate, but by phenylmethylsulfonyl fluoride (PMSF) only in the presence of substrate. Several water-miscible solvents enhance the lipase hydrolytic activity in vitro. Tetrahydrofuran and N,N-dimethylformamide (both 50%) inactivate the enzyme with t1/2 of 5 minutes and t1/2 of 2 hours, respectively. Its function is as follows. Catalyzes the hydrolysis of p-nitrophenyl esters, alpha- and beta-naphthyl esters, and triacylglycerols, with a preference for medium acyl chain length (C8-C12). Shows a much higher hydrolysis rate of glycerol esters of unsaturated C16 and C18 fatty acids than that of their saturated counterparts, and a preference for cis double bond. Is also able to hydrolyze several natural oils and Tween detergents. Also displays thioesterase and phospholipase activities, towards palmitoyl-coenzyme A and diheptanoyl glycerophosphocholine, respectively. Shows transesterification activity of racemic 1-phenyl ethanol with vinyl acetate in hexane, proceeding with partial (R)-enantioselectivity. This Streptomyces rimosus protein is Lipase.